The following is a 395-amino-acid chain: Putative 8-amino-7-oxononanoate synthase (395 aa).

Arginine 23 is a binding site for substrate. 110 to 111 provides a ligand contact to pyridoxal 5'-phosphate; the sequence is GY. Histidine 135 contacts substrate. Pyridoxal 5'-phosphate contacts are provided by residues serine 182, 207–210, and 239–242; these read DEAH and TFSK. N6-(pyridoxal phosphate)lysine is present on lysine 242. Residue threonine 356 coordinates substrate.

The protein belongs to the class-II pyridoxal-phosphate-dependent aminotransferase family. BioF subfamily. As to quaternary structure, homodimer. Pyridoxal 5'-phosphate is required as a cofactor.

It carries out the reaction 6-carboxyhexanoyl-[ACP] + L-alanine + H(+) = (8S)-8-amino-7-oxononanoate + holo-[ACP] + CO2. Its pathway is cofactor biosynthesis; biotin biosynthesis. Its function is as follows. Catalyzes the decarboxylative condensation of pimeloyl-[acyl-carrier protein] and L-alanine to produce 8-amino-7-oxononanoate (AON), [acyl-carrier protein], and carbon dioxide. The chain is Putative 8-amino-7-oxononanoate synthase (bioF) from Bacillus cereus (strain G9842).